The sequence spans 163 residues: Probable cobalt-precorrin-6B C(15)-methyltransferase (decarboxylating) (163 aa).

Residues threonine 6, 30–34 (GCGSG), aspartate 51, and glycine 75 each bind S-adenosyl-L-methionine.

It belongs to the methyltransferase superfamily. Archaeal-type CbiT family.

The enzyme catalyses Co-precorrin-6B + S-adenosyl-L-methionine = Co-precorrin-7 + S-adenosyl-L-homocysteine + CO2. It functions in the pathway cofactor biosynthesis; adenosylcobalamin biosynthesis; cob(II)yrinate a,c-diamide from sirohydrochlorin (anaerobic route): step 8/10. Catalyzes the methylation of C-15 in cobalt-precorrin-6B followed by the decarboxylation of C-12 to form cobalt-precorrin-7. This Archaeoglobus fulgidus (strain ATCC 49558 / DSM 4304 / JCM 9628 / NBRC 100126 / VC-16) protein is Probable cobalt-precorrin-6B C(15)-methyltransferase (decarboxylating).